Reading from the N-terminus, the 188-residue chain is Trafficking protein particle complex subunit 5 (188 aa).

It belongs to the TRAPP small subunits family. BET3 subfamily. As to quaternary structure, part of the multisubunit TRAPP (transport protein particle) complex.

It localises to the golgi apparatus. Its subcellular location is the cis-Golgi network. It is found in the endoplasmic reticulum. Functionally, may play a role in vesicular transport from endoplasmic reticulum to Golgi. This Gallus gallus (Chicken) protein is Trafficking protein particle complex subunit 5 (TRAPPC5).